The chain runs to 179 residues: Translation initiation factor IF-3 (179 aa).

This sequence belongs to the IF-3 family. Monomer.

It localises to the cytoplasm. In terms of biological role, IF-3 binds to the 30S ribosomal subunit and shifts the equilibrium between 70S ribosomes and their 50S and 30S subunits in favor of the free subunits, thus enhancing the availability of 30S subunits on which protein synthesis initiation begins. The protein is Translation initiation factor IF-3 of Bradyrhizobium diazoefficiens (strain JCM 10833 / BCRC 13528 / IAM 13628 / NBRC 14792 / USDA 110).